An 89-amino-acid polypeptide reads, in one-letter code: Signal recognition particle 19 kDa protein (89 aa).

This sequence belongs to the SRP19 family. Part of the signal recognition particle protein translocation system, which is composed of SRP and FtsY. Archaeal SRP consists of a 7S RNA molecule of 300 nucleotides and two protein subunits: SRP54 and SRP19.

The protein localises to the cytoplasm. Involved in targeting and insertion of nascent membrane proteins into the cytoplasmic membrane. Binds directly to 7S RNA and mediates binding of the 54 kDa subunit of the SRP. The sequence is that of Signal recognition particle 19 kDa protein from Methanococcus maripaludis (strain C7 / ATCC BAA-1331).